A 310-amino-acid chain; its full sequence is Mycothiol acetyltransferase (310 aa).

2 N-acetyltransferase domains span residues 5–155 and 160–309; these read TTVE…HPAR and PPFR…LPAA. Acetyl-CoA is bound at residue 80 to 82; the sequence is LLV. 1D-myo-inositol 2-(L-cysteinylamino)-2-deoxy-alpha-D-glucopyranoside-binding residues include Asp187, Lys226, and Glu238. 242-244 lines the acetyl-CoA pocket; sequence IAT. Position 276 (Tyr276) interacts with 1D-myo-inositol 2-(L-cysteinylamino)-2-deoxy-alpha-D-glucopyranoside. 281 to 286 is a binding site for acetyl-CoA; it reads NERALR.

It belongs to the acetyltransferase family. MshD subfamily. As to quaternary structure, monomer.

It catalyses the reaction 1D-myo-inositol 2-(L-cysteinylamino)-2-deoxy-alpha-D-glucopyranoside + acetyl-CoA = mycothiol + CoA + H(+). Its function is as follows. Catalyzes the transfer of acetyl from acetyl-CoA to desacetylmycothiol (Cys-GlcN-Ins) to form mycothiol. This chain is Mycothiol acetyltransferase, found in Acidimicrobium ferrooxidans (strain DSM 10331 / JCM 15462 / NBRC 103882 / ICP).